Reading from the N-terminus, the 297-residue chain is uncharacterized protein (297 aa).

The segment at 175-199 (VLPTNRNNPVRSNVDIKPVNPPSSK) is disordered. A compositionally biased stretch (polar residues) spans 176–185 (LPTNRNNPVR). N-linked (GlcNAc...) asparagine; by host glycosylation occurs at asparagine 269. A helical transmembrane segment spans residues 277 to 297 (LFGSPVLLICVASLLLLIIIL).

The protein belongs to the ascovirus HvAV ORF18 family.

It is found in the membrane. This is an uncharacterized protein from Noctuidae (owlet moths).